Reading from the N-terminus, the 1574-residue chain is DNA-directed RNA polymerase subunit beta' (1574 aa).

Cys-64, Cys-66, Cys-79, and Cys-82 together coordinate Zn(2+). Residues Asp-590, Asp-592, and Asp-594 each contribute to the Mg(2+) site. Zn(2+) is bound by residues Cys-928, Cys-1002, Cys-1009, and Cys-1012.

This sequence belongs to the RNA polymerase beta' chain family. In terms of assembly, the RNAP catalytic core consists of 2 alpha, 1 beta, 1 beta' and 1 omega subunit. When a sigma factor is associated with the core the holoenzyme is formed, which can initiate transcription. The cofactor is Mg(2+). Zn(2+) is required as a cofactor.

It catalyses the reaction RNA(n) + a ribonucleoside 5'-triphosphate = RNA(n+1) + diphosphate. DNA-dependent RNA polymerase catalyzes the transcription of DNA into RNA using the four ribonucleoside triphosphates as substrates. The sequence is that of DNA-directed RNA polymerase subunit beta' from Aquifex aeolicus (strain VF5).